The chain runs to 295 residues: Multistep phosphorelay regulator 1 (295 aa).

Residues 89-110 (KSENNQQLAANETAGAPEGTEE) form a disordered region. Over residues 97-106 (AANETAGAPE) the composition is skewed to low complexity. In terms of domain architecture, HPt spans 182 to 284 (EHEFSKSIVW…NDFYKDARAY (103 aa)). At His-221 the chain carries Phosphohistidine.

In terms of biological role, binds to the msc4 response regulator which is part of a multistep phosphorelay system that transmits oxidative stress signals to the spc1 MAPK cascade. The polypeptide is Multistep phosphorelay regulator 1 (mpr1) (Schizosaccharomyces pombe (strain 972 / ATCC 24843) (Fission yeast)).